We begin with the raw amino-acid sequence, 254 residues long: 4-hydroxy-tetrahydrodipicolinate reductase (254 aa).

Residues 8-13 (GASGKM), 87-89 (GTT), and 111-114 (ATNM) each bind NAD(+). H143 acts as the Proton donor/acceptor in catalysis. H144 contacts (S)-2,3,4,5-tetrahydrodipicolinate. K147 (proton donor) is an active-site residue. A (S)-2,3,4,5-tetrahydrodipicolinate-binding site is contributed by 153 to 154 (GT).

Belongs to the DapB family.

Its subcellular location is the cytoplasm. The catalysed reaction is (S)-2,3,4,5-tetrahydrodipicolinate + NAD(+) + H2O = (2S,4S)-4-hydroxy-2,3,4,5-tetrahydrodipicolinate + NADH + H(+). The enzyme catalyses (S)-2,3,4,5-tetrahydrodipicolinate + NADP(+) + H2O = (2S,4S)-4-hydroxy-2,3,4,5-tetrahydrodipicolinate + NADPH + H(+). It functions in the pathway amino-acid biosynthesis; L-lysine biosynthesis via DAP pathway; (S)-tetrahydrodipicolinate from L-aspartate: step 4/4. In terms of biological role, catalyzes the conversion of 4-hydroxy-tetrahydrodipicolinate (HTPA) to tetrahydrodipicolinate. The protein is 4-hydroxy-tetrahydrodipicolinate reductase of Campylobacter curvus (strain 525.92).